The chain runs to 381 residues: tRNA pseudouridine synthase D (381 aa).

The active-site Nucleophile is Asp81. A TRUD domain is found at 160–335; that stretch reads GMPNYFGSQR…TLGSRRFFWV (176 aa).

This sequence belongs to the pseudouridine synthase TruD family.

The catalysed reaction is uridine(13) in tRNA = pseudouridine(13) in tRNA. Functionally, responsible for synthesis of pseudouridine from uracil-13 in transfer RNAs. This chain is tRNA pseudouridine synthase D, found in Helicobacter pylori (strain G27).